Reading from the N-terminus, the 411-residue chain is Citrate synthase (411 aa).

Catalysis depends on residues histidine 304 and aspartate 363.

Belongs to the citrate synthase family.

The catalysed reaction is oxaloacetate + acetyl-CoA + H2O = citrate + CoA + H(+). It participates in carbohydrate metabolism; tricarboxylic acid cycle; isocitrate from oxaloacetate: step 1/2. The protein is Citrate synthase (gltA) of Rickettsia parkeri.